We begin with the raw amino-acid sequence, 610 residues long: Manganese lipoxygenase (610 aa).

The first 16 residues, 1 to 16 (MVALLIFLGIFTCVET), serve as a signal peptide directing secretion. Positions 47-610 (FTLPNEDDEI…PGVIPFYLSV (564 aa)) constitute a Lipoxygenase domain. 2 N-linked (GlcNAc...) asparagine glycosylation sites follow: N157 and N259. Mn(2+)-binding residues include H290 and H295. A glycan (N-linked (GlcNAc...) asparagine) is linked at N386. Residues H475 and N479 each contribute to the Mn(2+) site. The N-linked (GlcNAc...) asparagine glycan is linked to N540. Mn(2+) is bound at residue V610.

The protein belongs to the lipoxygenase family. Manganese lipoxygenase subfamily. Mn(2+) is required as a cofactor. In terms of processing, N- and O-glycosylated.

It is found in the secreted. It carries out the reaction (9Z,12Z)-octadecadienoate + O2 = (11S)-hydroperoxy-(9Z,12Z)-octadecadienoate. The enzyme catalyses (9Z,12Z)-octadecadienoate + O2 = (11R)-hydroperoxy-(9Z,12Z)-octadecadienoate. The catalysed reaction is (9Z,12Z)-octadecadienoate + O2 = (13S)-hydroperoxy-(9Z,11E)-octadecadienoate. It catalyses the reaction (9Z,12Z,15Z)-octadecatrienoate + O2 = (11S)-hydroperoxy-(9Z,12Z,15Z)-octadecatrienoate. Functionally, lipoxygenase that metabolizes linoleic and alpha-linolenic acids to 9-, 11- and 13-hydroperoxy fatty acids. Oxidizes linoleic acid to mainly 11R-, 13S- and racemic 9-HPODE, and alpha-linolenic acid to 11-HPOTrE. In Fusarium oxysporum (strain Fo5176) (Fusarium vascular wilt), this protein is Manganese lipoxygenase.